The following is a 1294-amino-acid chain: uncharacterized protein (1294 aa).

This is an uncharacterized protein from Schizosaccharomyces pombe (strain 972 / ATCC 24843) (Fission yeast).